A 338-amino-acid polypeptide reads, in one-letter code: Malate dehydrogenase, mitochondrial (338 aa).

A mitochondrion-targeting transit peptide spans 1–24 (MLSALARPAGAALRRSFSTSAQNN). NAD(+) is bound by residues 31 to 37 (GASGGIG) and Asp57. O-linked (GlcNAc) serine glycosylation is present at Ser33. 2 positions are modified to N6-acetyllysine; alternate: Lys78 and Lys91. 2 positions are modified to N6-succinyllysine; alternate: Lys78 and Lys91. Substrate contacts are provided by Arg104 and Arg110. Residues Asn117 and 140–142 (ISN) each bind NAD(+). Asn142 provides a ligand contact to substrate. Lys165 is modified (N6-acetyllysine). Residue Arg176 coordinates substrate. Lys185 is modified (N6-acetyllysine; alternate). Residue Lys185 is modified to N6-succinyllysine; alternate. His200 (proton acceptor) is an active-site residue. Lys203 is subject to N6-succinyllysine. 2 positions are modified to N6-acetyllysine; alternate: Lys215 and Lys239. N6-succinyllysine; alternate occurs at positions 215 and 239. Residue Lys239 is modified to N6-malonyllysine; alternate. The residue at position 246 (Ser246) is a Phosphoserine. Position 251 (Met251) interacts with NAD(+). N6-succinyllysine is present on Lys269. Residues Lys296, Lys301, Lys307, Lys314, and Lys324 each carry the N6-acetyllysine; alternate modification. 5 positions are modified to N6-succinyllysine; alternate: Lys296, Lys301, Lys307, Lys314, and Lys324. N6-malonyllysine; alternate is present on Lys307. Residue Ser326 is modified to Phosphoserine. Lys328, Lys329, and Lys335 each carry N6-acetyllysine; alternate. Position 328 is an N6-succinyllysine; alternate (Lys328). At Lys329 the chain carries N6-malonyllysine; alternate. Lys335 carries the post-translational modification N6-succinyllysine; alternate.

This sequence belongs to the LDH/MDH superfamily. MDH type 1 family. In terms of assembly, homodimer. Post-translationally, acetylation is enhanced after treatment either with trichostin A (TCA) or with nicotinamide (NAM) with the appearance of tri- and tetraacetylations. Glucose also increases acetylation.

It localises to the mitochondrion matrix. It carries out the reaction (S)-malate + NAD(+) = oxaloacetate + NADH + H(+). Enzyme activity is enhanced by acetylation. The sequence is that of Malate dehydrogenase, mitochondrial (MDH2) from Bos taurus (Bovine).